The primary structure comprises 505 residues: Geissoschizine oxidase (505 aa).

A helical membrane pass occupies residues 9–29; the sequence is FSSPAFFLLLPFLFLLIKPLI. Residue Cys-443 participates in heme binding.

It belongs to the cytochrome P450 family. Heme serves as cofactor. As to expression, mainly expressed in roots.

Its subcellular location is the membrane. The catalysed reaction is (19E)-geissoschizine + reduced [NADPH--hemoprotein reductase] + O2 = akuammicine + formate + oxidized [NADPH--hemoprotein reductase] + H2O + H(+). It catalyses the reaction (19E)-geissoschizine + reduced [NADPH--hemoprotein reductase] + O2 = 3,17-didehydrostemmadenine + oxidized [NADPH--hemoprotein reductase] + 2 H2O. It carries out the reaction 3,17-didehydrostemmadenine = 17-dehydropreakuammicine. The protein operates within alkaloid biosynthesis. Functionally, monooxygenase involved in the biosynthesis of curare monoterpene indole alkaloids (MIAs), natural products such as strychnine, a neurotoxic compound used as a pesticide to control rodents, and its pharmacologically active derivatives, including brucine, used to regulate blood pressure. Curare alkaloids act as animal glycine receptor antagonists. Catalyzes the conversion of geissoschizine to dehydropreakuammicine by cyclization, which is spontaneously converted into akuammicine by aromatization. This chain is Geissoschizine oxidase, found in Strychnos nux-vomica (Poison nut).